Reading from the N-terminus, the 357-residue chain is MIMAGGTGGHVFPGLAVARSMQANGWRIVWLGTRNGMEAALVPQHGFSIELINFSGLRGKKLSSYLLLPWRLAQACWQSFRILRRQQPQVVLGMGGYPALPGGIMAVLLGKPLLIHEQNRIAGLTNKILAKIADRILLAFPGALTSPENKTRVTGNPVRTEIARLPSPEARYAHRTGNLHILVVGGSLGAQVLNTVLPQALSMIPEDQRPYVTHQSGKAHLDALQQAYADHGVTGNLVAFIENMAAHYQDCDLVICRAGALTISELAAAGVASILIPYPYAVDDHQTANARFLSDYQAAVLWPQSELTAASLAQWLMTCSRAQLQSMATHARALAMPEAAQTVAEACQQLSGQTNEA.

UDP-N-acetyl-alpha-D-glucosamine contacts are provided by residues 7–9 (TGG), N119, R159, S187, I241, and Q286.

The protein belongs to the glycosyltransferase 28 family. MurG subfamily.

It localises to the cell inner membrane. It catalyses the reaction di-trans,octa-cis-undecaprenyl diphospho-N-acetyl-alpha-D-muramoyl-L-alanyl-D-glutamyl-meso-2,6-diaminopimeloyl-D-alanyl-D-alanine + UDP-N-acetyl-alpha-D-glucosamine = di-trans,octa-cis-undecaprenyl diphospho-[N-acetyl-alpha-D-glucosaminyl-(1-&gt;4)]-N-acetyl-alpha-D-muramoyl-L-alanyl-D-glutamyl-meso-2,6-diaminopimeloyl-D-alanyl-D-alanine + UDP + H(+). It participates in cell wall biogenesis; peptidoglycan biosynthesis. In terms of biological role, cell wall formation. Catalyzes the transfer of a GlcNAc subunit on undecaprenyl-pyrophosphoryl-MurNAc-pentapeptide (lipid intermediate I) to form undecaprenyl-pyrophosphoryl-MurNAc-(pentapeptide)GlcNAc (lipid intermediate II). The sequence is that of UDP-N-acetylglucosamine--N-acetylmuramyl-(pentapeptide) pyrophosphoryl-undecaprenol N-acetylglucosamine transferase from Nitrosomonas europaea (strain ATCC 19718 / CIP 103999 / KCTC 2705 / NBRC 14298).